Reading from the N-terminus, the 1047-residue chain is Jouberin (1047 aa).

Basic and acidic residues-rich tracts occupy residues 1–17, 29–40, and 77–86; these read MEPE…EKVR, SREKTGIEEKGE, and LLHDDKLASE. Disordered regions lie at residues 1 to 40 and 67 to 181; these read MEPE…EKGE and EQLT…SRDS. The tract at residues 1 to 284 is interaction with HAP1; it reads MEPETPEKVD…IFNENFPYLL (284 aa). Positions 96–106 are enriched in low complexity; the sequence is PVPTKPESSPS. Basic and acidic residues predominate over residues 115 to 138; the sequence is GEQKKEGTPEDSQHMEGICSREQD. Basic residues predominate over residues 149–159; it reads PKPKKTKKKTK. Basic and acidic residues predominate over residues 172-181; sequence GVHEITSRDS. 7 WD repeats span residues 457–499, 502–541, 545–585, 592–631, 648–687, 691–730, and 735–776; these read AGER…FMRE, GHLN…TSTF, PHPS…DAAI, VHKS…NDVQ, FRGV…ARKF, ANYR…QVAM, and PFKS…AQQE. At S853 the chain carries Phosphoserine. The 61-residue stretch at 902-962 folds into the SH3 domain; sequence DPPPMVVALY…PANHVASETL (61 aa). Composition is skewed to basic and acidic residues over residues 963–987 and 1013–1040; these read YRDS…KPEK and HSEK…EPVV. The tract at residues 963–1047 is disordered; that stretch reads YRDSPPKVKE…PVVRKVTLIE (85 aa). Phosphoserine is present on S974.

As to quaternary structure, self-associates. Part of the tectonic-like complex (also named B9 complex). Interacts with MKS1. Interacts with NPHP1; probably as heterodimers and/or AHI1(2):NPHP1(2) heterotetramers. Interacts (via SH3 domain) with the dynamin GTPase DNM2. Interacts with HAP1; probably as AHI1(2):HAP1(2) heterotetramers. Interacts with RAB8A. Interacts with CEND1. Interacts with SPATA7. Expressed in the retina (at protein level). Highly expressed in the brain. Highly expressed in the testis. Expressed in the kidney, thymus, heart, lung, spleen. Weakly expressed in the liver, stomach, pancreas, and embryo. Strongly expressed during periods of both cortical and cerebellar development.

The protein localises to the cytoplasm. It is found in the cytoskeleton. Its subcellular location is the cilium basal body. It localises to the microtubule organizing center. The protein resides in the centrosome. The protein localises to the centriole. It is found in the cell junction. Its subcellular location is the adherens junction. Involved in vesicle trafficking and required for ciliogenesis, formation of primary non-motile cilium, and recruitment of RAB8A to the basal body of primary cilium. Component of the tectonic-like complex, a complex localized at the transition zone of primary cilia and acting as a barrier that prevents diffusion of transmembrane proteins between the cilia and plasma membranes. Involved in neuronal differentiation. As a positive modulator of classical Wnt signaling, may play a crucial role in ciliary signaling during cerebellum embryonic development. The protein is Jouberin (Ahi1) of Mus musculus (Mouse).